We begin with the raw amino-acid sequence, 159 residues long: Transcriptional repressor NrdR (159 aa).

A zinc finger spans residues cysteine 3–cysteine 34. The region spanning leucine 49–valine 139 is the ATP-cone domain.

The protein belongs to the NrdR family. Zn(2+) is required as a cofactor.

Negatively regulates transcription of bacterial ribonucleotide reductase nrd genes and operons by binding to NrdR-boxes. The chain is Transcriptional repressor NrdR from Brevibacillus brevis (strain 47 / JCM 6285 / NBRC 100599).